The primary structure comprises 124 residues: Small ribosomal subunit protein uS12 (124 aa).

Positions 1 to 24 (MPTINQLIKKPRKSQKEKTASPAL) are disordered. At Asp89 the chain carries 3-methylthioaspartic acid.

It belongs to the universal ribosomal protein uS12 family. Part of the 30S ribosomal subunit. Contacts proteins S8 and S17. May interact with IF1 in the 30S initiation complex.

In terms of biological role, with S4 and S5 plays an important role in translational accuracy. Functionally, interacts with and stabilizes bases of the 16S rRNA that are involved in tRNA selection in the A site and with the mRNA backbone. Located at the interface of the 30S and 50S subunits, it traverses the body of the 30S subunit contacting proteins on the other side and probably holding the rRNA structure together. The combined cluster of proteins S8, S12 and S17 appears to hold together the shoulder and platform of the 30S subunit. The sequence is that of Small ribosomal subunit protein uS12 from Borrelia hermsii (strain HS1 / DAH).